A 168-amino-acid polypeptide reads, in one-letter code: Cytochrome c-type biogenesis protein CcmE (168 aa).

Topologically, residues 1–7 are cytoplasmic; the sequence is MTRKQRR. A helical; Signal-anchor for type II membrane protein membrane pass occupies residues 8–28; that stretch reads LMLIGVCGAVLAVALGLVLWA. At 29 to 168 the chain is on the periplasmic side; it reads MRGTIVFFRS…SGEKPALRQQ (140 aa). Residues H122 and Y126 each coordinate heme. The disordered stretch occupies residues 134 to 168; that stretch reads ALKKQGHWQGEAKHPGGTAPAPQTASGEKPALRQQ.

Belongs to the CcmE/CycJ family.

The protein localises to the cell inner membrane. Its function is as follows. Heme chaperone required for the biogenesis of c-type cytochromes. Transiently binds heme delivered by CcmC and transfers the heme to apo-cytochromes in a process facilitated by CcmF and CcmH. In Methylobacterium nodulans (strain LMG 21967 / CNCM I-2342 / ORS 2060), this protein is Cytochrome c-type biogenesis protein CcmE.